Here is a 507-residue protein sequence, read N- to C-terminus: Glycerol kinase 2 (507 aa).

Thr-16 contributes to the ADP binding site. ATP contacts are provided by Thr-16, Thr-17, and Ser-18. A sn-glycerol 3-phosphate-binding site is contributed by Thr-16. Residue Arg-20 coordinates ADP. Sn-glycerol 3-phosphate contacts are provided by Arg-86, Glu-87, Tyr-138, and Asp-248. Glycerol-binding residues include Arg-86, Glu-87, Tyr-138, Asp-248, and Gln-249. ADP-binding residues include Thr-270 and Gly-314. ATP-binding residues include Thr-270, Gly-314, Gln-318, and Gly-415. 2 residues coordinate ADP: Gly-415 and Asn-419.

It belongs to the FGGY kinase family.

It catalyses the reaction glycerol + ATP = sn-glycerol 3-phosphate + ADP + H(+). It functions in the pathway polyol metabolism; glycerol degradation via glycerol kinase pathway; sn-glycerol 3-phosphate from glycerol: step 1/1. With respect to regulation, inhibited by fructose 1,6-bisphosphate (FBP). Its function is as follows. Key enzyme in the regulation of glycerol uptake and metabolism. Catalyzes the phosphorylation of glycerol to yield sn-glycerol 3-phosphate. The chain is Glycerol kinase 2 from Streptomyces avermitilis (strain ATCC 31267 / DSM 46492 / JCM 5070 / NBRC 14893 / NCIMB 12804 / NRRL 8165 / MA-4680).